We begin with the raw amino-acid sequence, 501 residues long: G protein-activated inward rectifier potassium channel 1 (501 aa).

A disordered region spans residues 1 to 40 (MSALRRKFGDDYQVVTTSSSGSGLQPQGPGQGPQQQLVPK). At 1–80 (MSALRRKFGD…LFTTLVDLKW (80 aa)) the chain is on the cytoplasmic side. Over residues 18–37 (SSSGSGLQPQGPGQGPQQQL) the composition is skewed to low complexity. A helical transmembrane segment spans residues 81-105 (RWNLFIFILTYTVAWLFMASMWWVI). At 106-129 (AYTRGDLNKAHVGNYTPCVANVYN) the chain is on the extracellular side. N-linked (GlcNAc...) asparagine glycosylation occurs at N119. The helical; Pore-forming intramembrane region spans 130 to 141 (FPSAFLFFIETE). Residues 142–148 (ATIGYGY) constitute an intramembrane region (pore-forming). Residues 143–148 (TIGYGY) carry the Selectivity filter motif. The Extracellular segment spans residues 149-157 (RYITDKCPE). The helical transmembrane segment at 158 to 179 (GIILFLFQSILGSIVDAFLIGC) threads the bilayer. Topologically, residues 180–501 (MFIKMSQPKK…LRKMNSDRFT (322 aa)) are cytoplasmic. The polyphosphoinositide (PIP2)-binding stretch occupies residues 182–209 (IKMSQPKKRAETLMFSEHAVISMRDGKL). S385 and S424 each carry phosphoserine. Residues 456–467 (TKMLSDPMSQSV) are compositionally biased toward polar residues. A disordered region spans residues 456 to 501 (TKMLSDPMSQSVADLPPKLQKMAGGPTRMEGNLPAKLRKMNSDRFT).

This sequence belongs to the inward rectifier-type potassium channel (TC 1.A.2.1) family. KCNJ3 subfamily. As to quaternary structure, associates with KCNJ5/GIRK4 or KCNJ6/GIRK2 to form a G-protein activated heteromultimer pore-forming unit. The resulting inward current is much larger. Associates with KCNJ9/GIRK3 to form a G-protein activated heteromultimer pore-forming unit.

The protein localises to the membrane. It catalyses the reaction K(+)(in) = K(+)(out). With respect to regulation, heteromultimer composed of KCNJ3/GIRK1 and KCNJ5/GIRK4 is activated by phosphatidylinositol 4,5 biphosphate (PtdIns(4,5)P2). In terms of biological role, inward rectifier potassium channels are characterized by a greater tendency to allow potassium to flow into the cell rather than out of it. Their voltage dependence is regulated by the concentration of extracellular potassium; as external potassium is raised, the voltage range of the channel opening shifts to more positive voltages. The inward rectification is mainly due to the blockage of outward current by internal magnesium. This potassium channel is controlled by G proteins. This receptor plays a crucial role in regulating the heartbeat. Forms a functional channel in association with KCNJ9/GIRK3. This is G protein-activated inward rectifier potassium channel 1 (Kcnj3) from Rattus norvegicus (Rat).